Consider the following 620-residue polypeptide: Chaperone protein HscA homolog (620 aa).

It belongs to the heat shock protein 70 family.

Chaperone involved in the maturation of iron-sulfur cluster-containing proteins. Has a low intrinsic ATPase activity which is markedly stimulated by HscB. The polypeptide is Chaperone protein HscA homolog (Acinetobacter baumannii (strain SDF)).